The primary structure comprises 273 residues: SPRY domain-containing SOCS box protein 4 (273 aa).

The interval 1–34 is disordered; the sequence is MGQKLSGSLKSVEVREPALRPAKRELRGAEPGRP. The segment covering 12 to 34 has biased composition (basic and acidic residues); it reads VEVREPALRPAKRELRGAEPGRP. A B30.2/SPRY domain is found at 34–233; the sequence is PARLDQLLDM…MRYINGLDPE (200 aa). Positions 234–273 constitute an SOCS box domain; it reads PLPLMDLCRRSIRSALGRQRLQDISSLPLPQSLKNYLQYQ.

It belongs to the SPSB family. Component of the probable ECS(SPSB4) E3 ubiquitin-protein ligase complex which contains CUL5, RNF7/RBX2, Elongin BC complex and SPSB4. Interacts with CUL5; RNF7; ELOB and ELOC. Interacts with MET. Interacts (via B30.2/SPRY domain) with PAWR; this interaction occurs in association with the Elongin BC complex. Interacts with NOS2. Interacts with EPHB2.

The protein localises to the cytoplasm. It is found in the cytosol. It participates in protein modification; protein ubiquitination. Substrate recognition component of a SCF-like ECS (Elongin BC-CUL2/5-SOCS-box protein) E3 ubiquitin-protein ligase complex which mediates the ubiquitination and subsequent proteasomal degradation of target proteins. Negatively regulates nitric oxide (NO) production and limits cellular toxicity in activated macrophages by mediating the ubiquitination and proteasomal degradation of NOS2. Acts as a bridge which links NOS2 with the ECS E3 ubiquitin ligase complex components ELOC and CUL5. Diminishes EphB2-dependent cell repulsive responses by mediating the ubiquitination and degradation of EphB2/CTF2. Regulates cellular clock function by mediating the ubiquitin/proteasome-dependent degradation of the circadian transcriptional repressor NR1D1. This chain is SPRY domain-containing SOCS box protein 4 (SPSB4), found in Homo sapiens (Human).